The primary structure comprises 502 residues: Probable malate:quinone oxidoreductase 1 (502 aa).

This sequence belongs to the MQO family. The cofactor is FAD.

The enzyme catalyses (S)-malate + a quinone = a quinol + oxaloacetate. It functions in the pathway carbohydrate metabolism; tricarboxylic acid cycle; oxaloacetate from (S)-malate (quinone route): step 1/1. This Pseudomonas putida (strain ATCC 47054 / DSM 6125 / CFBP 8728 / NCIMB 11950 / KT2440) protein is Probable malate:quinone oxidoreductase 1.